The chain runs to 422 residues: Nucleoside transporter 1 (422 aa).

Residues 1–38 lie on the Cytoplasmic side of the membrane; that stretch reads MSTGKESSKAYADIESRGDYKDDGKKGSTLSSKQHFML. The chain crosses the membrane as a helical span at residues 39-59; it reads SLTFILIGLSSLNVWNTALGL. Residue Trp53 participates in inosine binding. Residues 60-63 are Extracellular-facing; the sequence is NINF. A helical transmembrane segment spans residues 64–82; the sequence is KYNTFQITGLVCSSIVALF. At 83–87 the chain is on the cytoplasmic side; it reads VEIPK. A helical transmembrane segment spans residues 88 to 107; sequence IMLPFLLGGLSILCAGFQIS. Over 108-116 the chain is Extracellular; that stretch reads HSFFTDTQF. The chain crosses the membrane as a helical span at residues 117–139; that stretch reads DTYCLVAFIVIGVVAGLAQTIAF. Inosine is bound at residue Gln135. Over 140–149 the chain is Cytoplasmic; the sequence is NIGSTMEDNM. Residues 150-174 form a helical membrane-spanning segment; that stretch reads GGYMSAGIGISGVFIFVINLLLDQF. Residues 175–185 lie on the Extracellular side of the membrane; sequence VSPEKHYGVNK. A helical membrane pass occupies residues 186–208; sequence AKLLYLYIICELCLILAIVFCVC. The Cytoplasmic segment spans residues 209 to 241; that stretch reads NLDLTNKNNKKDEENKENNATLSYMELFKDSYK. The chain crosses the membrane as a helical span at residues 242–265; sequence AILTMFLVNWLTLQLFPGVGHKKW. Residues 266-274 lie on the Extracellular side of the membrane; the sequence is QESHNISDY. A helical transmembrane segment spans residues 275–294; sequence NVTIIVGMFQVFDFLSRYPP. Positions 287 and 291 each coordinate inosine. Topologically, residues 295 to 309 are cytoplasmic; the sequence is NLTHIKIFKNFTFSL. The chain crosses the membrane as a helical span at residues 310–330; it reads NKLLVANSLRLLFIPWFILNA. Residues 331–338 lie on the Extracellular side of the membrane; it reads CVDHPFFK. A helical membrane pass occupies residues 339–362; that stretch reads NIVQQCVCMAMLAFTNGWFNTVPF. At 363–374 the chain is on the cytoplasmic side; the sequence is LVFVKELKKAKK. The chain crosses the membrane as a helical span at residues 375–397; that stretch reads KKEIEIISTFLVIAMFVGLFCGI. Over 398–422 the chain is Extracellular; sequence WTTYIYNLFNIVLPKPDLPPIDVTQ.

The protein belongs to the SLC29A/ENT transporter (TC 2.A.57) family.

The protein resides in the cell membrane. It carries out the reaction inosine(in) = inosine(out). It catalyses the reaction adenosine(in) = adenosine(out). The enzyme catalyses hypoxanthine(out) = hypoxanthine(in). The catalysed reaction is guanosine(in) = guanosine(out). It carries out the reaction guanine(out) = guanine(in). It catalyses the reaction thymidine(in) = thymidine(out). The enzyme catalyses uridine(out) = uridine(in). The catalysed reaction is uracil(in) = uracil(out). It carries out the reaction thymine(out) = thymine(in). It catalyses the reaction adenine(out) = adenine(in). The enzyme catalyses cytosine(out) = cytosine(in). The catalysed reaction is xanthine(out) = xanthine(in). Its activity is regulated as follows. GSK4 (5-methyl-N-[2-(2-oxo-1-azepanyl)ethyl]-2-phenyl-1,3-oxazole-4-carbox-amide) disrupts the transport activity at 500 nM. Inhibited partially by 10 uM dipyridamole. Inhibited partially by N,N'-1,3-benzothiazole-2,6-diyldi(2-furamide), 2-bromo-N-(4-[1,3]oxazolo[4,5-b]pyridin-2-ylphenyl)benzamide, 4-methyl-7-[(3,4,5-trimethoxybenzyl)oxy]-2H-chromen-2-one, 2-(1-methyl-1H-indol-3-yl)-2-oxo-N-[4-(pyrrolidin-1-ylcarbonyl)phenyl]acet amide and 2-[2-(2-methylphenyl)vinyl]-4(3H)-quinazolinone. In terms of biological role, sodium-independent nucleoside and nucleobase transporter with a broad substrate specificity. Plays a key role in the utilization of host purine sources by P.falciparum during intraerythrocytic development enabling parasite growth in the presence of physiological concentrations of adenosine, inosine, guanine, guanosine, xanthine and hypoxanthine. Essential for parasite transition from ring to trophozoite or from trophozoite to schizont stage but not for erythrocyte invasion by merozoites. This Plasmodium falciparum (isolate 3D7) protein is Nucleoside transporter 1.